The primary structure comprises 363 residues: RNA polymerase I-specific transcription initiation factor RRN5 (363 aa).

The tract at residues 301-344 (LSRRDAPPVHQDENQENQENQENQEQDNTASEGESEAERDEIDE) is disordered. The segment covering 302-313 (SRRDAPPVHQDE) has biased composition (basic and acidic residues). Residues 317–328 (NQENQENQEQDN) show a composition bias toward low complexity. Over residues 333–344 (GESEAERDEIDE) the composition is skewed to acidic residues.

In terms of assembly, component of the UAF (upstream activation factor) complex which consists of UAF30, RRN5, RRN9, RRN10, and histones H3 and H4.

Its subcellular location is the nucleus. The protein localises to the nucleolus. In terms of biological role, component of the UAF (upstream activation factor) complex which interacts with the upstream element of the RNA polymerase I promoter and forms a stable preinitiation complex. Together with SPT15/TBP UAF seems to stimulate basal transcription to a fully activated level. The protein is RNA polymerase I-specific transcription initiation factor RRN5 (RRN5) of Saccharomyces cerevisiae (strain ATCC 204508 / S288c) (Baker's yeast).